The following is a 465-amino-acid chain: Keratin, type I cytoskeletal 13 (465 aa).

Polar residues predominate over residues 1–28; the sequence is MNFTSFSITQGSRPQPPSTRGFSGNSFK. The disordered stretch occupies residues 1 to 47; the sequence is MNFTSFSITQGSRPQPPSTRGFSGNSFKSDLIPQSRRSHSVYGTPGS. The tract at residues 1–98 is head; that stretch reads MNFTSFSITQ…SGGSDLLLGT (98 aa). The segment at 99–135 is coil 1A; sequence SGKEAMQNLNDRLASYLEKVRSLEERNRELEQKIREW. An IF rod domain is found at 100–412; the sequence is GKEAMQNLND…ILLEGDEGKF (313 aa). Positions 136–154 are linker 1; the sequence is YEKQGAGTKTKDFSHYFKI. Positions 155-246 are coil 1B; sequence IADLQKQIHD…KSHDEEMKAL (92 aa). Residues 247–269 are linker 12; the sequence is RSQLGGQVNVEVDAAPAEDLTKK. Positions 270 to 408 are coil 2; sequence LERMRQQYEQ…RTYRILLEGD (139 aa). The interval 409–465 is tail; the sequence is EGKFQTSPHHPSIVTKQTETVVTPVVITNVKTVVEEIIDGKIVSKKEYPGPPEKLMI.

This sequence belongs to the intermediate filament family. In terms of assembly, heterotetramer of two type I and two type II keratins. In terms of tissue distribution, expressed in skin.

Type 1 keratin. May maintain oral mucosal cell homeostasis and tissue organization in response to mechanical stress. The chain is Keratin, type I cytoskeletal 13 (KRT13) from Protopterus aethiopicus (Marbled lungfish).